The primary structure comprises 462 residues: Bifunctional protein HldE (462 aa).

Residues 1–309 (MKPRILVLGD…EYERSIRKAP (309 aa)) are ribokinase. 186-189 (NKKE) serves as a coordination point for ATP. Aspartate 254 is an active-site residue. The cytidylyltransferase stretch occupies residues 336-462 (FTNGCFDILH…TAIVERMRSC (127 aa)).

In the N-terminal section; belongs to the carbohydrate kinase PfkB family. This sequence in the C-terminal section; belongs to the cytidylyltransferase family. As to quaternary structure, homodimer.

It catalyses the reaction D-glycero-beta-D-manno-heptose 7-phosphate + ATP = D-glycero-beta-D-manno-heptose 1,7-bisphosphate + ADP + H(+). It carries out the reaction D-glycero-beta-D-manno-heptose 1-phosphate + ATP + H(+) = ADP-D-glycero-beta-D-manno-heptose + diphosphate. Its pathway is nucleotide-sugar biosynthesis; ADP-L-glycero-beta-D-manno-heptose biosynthesis; ADP-L-glycero-beta-D-manno-heptose from D-glycero-beta-D-manno-heptose 7-phosphate: step 1/4. The protein operates within nucleotide-sugar biosynthesis; ADP-L-glycero-beta-D-manno-heptose biosynthesis; ADP-L-glycero-beta-D-manno-heptose from D-glycero-beta-D-manno-heptose 7-phosphate: step 3/4. Functionally, catalyzes the phosphorylation of D-glycero-D-manno-heptose 7-phosphate at the C-1 position to selectively form D-glycero-beta-D-manno-heptose-1,7-bisphosphate. Catalyzes the ADP transfer from ATP to D-glycero-beta-D-manno-heptose 1-phosphate, yielding ADP-D-glycero-beta-D-manno-heptose. This is Bifunctional protein HldE from Nitratiruptor sp. (strain SB155-2).